A 311-amino-acid chain; its full sequence is Malate dehydrogenase (311 aa).

Residues 7–13 (GAAGGIG) and Asp-34 each bind NAD(+). Arg-81 and Arg-87 together coordinate substrate. Residues Asn-94 and 117–119 (ITN) each bind NAD(+). Residues Asn-119 and Arg-153 each contribute to the substrate site. His-177 (proton acceptor) is an active-site residue. Residue Met-227 participates in NAD(+) binding.

It belongs to the LDH/MDH superfamily. MDH type 1 family. Homodimer.

It catalyses the reaction (S)-malate + NAD(+) = oxaloacetate + NADH + H(+). Catalyzes the reversible oxidation of malate to oxaloacetate. The sequence is that of Malate dehydrogenase from Shewanella baltica (strain OS223).